A 393-amino-acid chain; its full sequence is Mitogen-activated protein kinase SIPK (393 aa).

A compositionally biased stretch (polar residues) spans 1–11 (MDGSGQQTDTM). The segment at 1–31 (MDGSGQQTDTMMSDAGAEQPPPAPQPVAGMD) is disordered. The Protein kinase domain occupies 60–345 (KPPILPIGKG…VEGALAHPYL (286 aa)). ATP-binding positions include 66–74 (IGKGAYGIV) and lysine 89. Residue aspartate 186 is the Proton acceptor of the active site. Residues 218 to 220 (TEY) carry the TXY motif.

It belongs to the protein kinase superfamily. CMGC Ser/Thr protein kinase family. MAP kinase subfamily. In terms of assembly, interacts with SIPKK.

The enzyme catalyses L-tyrosyl-[protein] + ATP = O-phospho-L-tyrosyl-[protein] + ADP + H(+). It carries out the reaction L-seryl-[protein] + ATP = O-phospho-L-seryl-[protein] + ADP + H(+). It catalyses the reaction L-threonyl-[protein] + ATP = O-phospho-L-threonyl-[protein] + ADP + H(+). Activated by threonine and tyrosine phosphorylation. Functionally, phosphorylates myelin basic protein (MBP) in vitro. May be involved in disease resistance. In Nicotiana tabacum (Common tobacco), this protein is Mitogen-activated protein kinase SIPK.